We begin with the raw amino-acid sequence, 63 residues long: Large ribosomal subunit protein uL29 (63 aa).

This sequence belongs to the universal ribosomal protein uL29 family.

The polypeptide is Large ribosomal subunit protein uL29 (Shewanella oneidensis (strain ATCC 700550 / JCM 31522 / CIP 106686 / LMG 19005 / NCIMB 14063 / MR-1)).